The chain runs to 283 residues: Pantothenate synthetase (283 aa).

Residue 30 to 37 (MGNLHDGH) participates in ATP binding. Histidine 37 (proton donor) is an active-site residue. A (R)-pantoate-binding site is contributed by glutamine 61. Residue glutamine 61 coordinates beta-alanine. 149-152 (GEKD) is a binding site for ATP. Residue glutamine 155 coordinates (R)-pantoate. 186–189 (LSSR) provides a ligand contact to ATP.

It belongs to the pantothenate synthetase family. In terms of assembly, homodimer.

It is found in the cytoplasm. The catalysed reaction is (R)-pantoate + beta-alanine + ATP = (R)-pantothenate + AMP + diphosphate + H(+). It participates in cofactor biosynthesis; (R)-pantothenate biosynthesis; (R)-pantothenate from (R)-pantoate and beta-alanine: step 1/1. Catalyzes the condensation of pantoate with beta-alanine in an ATP-dependent reaction via a pantoyl-adenylate intermediate. The chain is Pantothenate synthetase from Shigella dysenteriae serotype 1 (strain Sd197).